An 89-amino-acid polypeptide reads, in one-letter code: YcgL domain-containing protein Asuc_1390 (89 aa).

One can recognise a YcgL domain in the interval 1–85 (MLCAIYKSKK…KDDWLFTIEK (85 aa)).

This Actinobacillus succinogenes (strain ATCC 55618 / DSM 22257 / CCUG 43843 / 130Z) protein is YcgL domain-containing protein Asuc_1390.